The sequence spans 213 residues: Small ribosomal subunit protein eS6 (213 aa).

The protein belongs to the eukaryotic ribosomal protein eS6 family.

In Sulfolobus acidocaldarius (strain ATCC 33909 / DSM 639 / JCM 8929 / NBRC 15157 / NCIMB 11770), this protein is Small ribosomal subunit protein eS6.